The primary structure comprises 143 residues: Transcriptional regulator MraZ (143 aa).

2 consecutive SpoVT-AbrB domains span residues 5–47 and 76–119; these read EYSH…PMAV and ALEA…SAEN.

It belongs to the MraZ family. In terms of assembly, forms oligomers.

It localises to the cytoplasm. It is found in the nucleoid. This Leuconostoc mesenteroides subsp. mesenteroides (strain ATCC 8293 / DSM 20343 / BCRC 11652 / CCM 1803 / JCM 6124 / NCDO 523 / NBRC 100496 / NCIMB 8023 / NCTC 12954 / NRRL B-1118 / 37Y) protein is Transcriptional regulator MraZ.